The chain runs to 169 residues: Transcription regulatory protein SNF11 (169 aa).

Positions 1-24 (MSSEIAYSNTNTNTENENRNTGAG) are disordered. Residue S2 is modified to N-acetylserine. Over residues 9–21 (NTNTNTENENRNT) the composition is skewed to low complexity. 8 consecutive repeat copies span residues 28–31 (NTNA), 32–35 (NANA), 36–39 (NATA), 40–43 (NATA), 44–47 (NATA), 48–51 (NATA), 76–80 (LLARV), and 160–165 (LLLARV). Residues 28-51 (NTNANANANATANATANATANATA) form a 6 X 4 AA tandem repeats of N-[AT]-[NT]-A region. Residues 76 to 165 (LLARVIQMNN…SKLYLLLARV (90 aa)) form a 2 X 5 AA repeats of L-L-A-R-V region.

As to quaternary structure, component of the SWI/SNF global transcription activator complex. The 1.14 MDa SWI/SNF complex is composed of 11 different subunits: one copy each of SWI1, SNF2/SWI2, SNF5, SNF12/SWP73, ARP7/SWP61, ARP9/SWP59; two copies each of SWI3, SNF6, SNF11, SWP82; and three copies of TAF14/SWP29.

Its subcellular location is the nucleus. Involved in transcriptional activation. Component of the SWI/SNF complex, an ATP-dependent chromatin remodeling complex, which is required for the positive and negative regulation of gene expression of a large number of genes. It changes chromatin structure by altering DNA-histone contacts within a nucleosome, leading eventually to a change in nucleosome position, thus facilitating or repressing binding of gene-specific transcription factors. This is Transcription regulatory protein SNF11 (SNF11) from Saccharomyces cerevisiae (strain ATCC 204508 / S288c) (Baker's yeast).